A 165-amino-acid chain; its full sequence is Transmembrane protein 128 (165 aa).

4 consecutive transmembrane segments (helical) span residues Asn-49–Phe-69, Trp-81–Val-101, Leu-119–Trp-139, and Phe-144–Leu-164.

It is found in the membrane. The protein is Transmembrane protein 128 (TMEM128) of Homo sapiens (Human).